The sequence spans 252 residues: Floral homeotic protein AGAMOUS (252 aa).

Positions 19 to 73 (RGKIEIKRIENTTNRQVTFCKRRNGLLKKAYELSVLCDAEVALIVFSSRGRLYEY) constitute an MADS-box domain. Residues 103–193 (AQYYQQESAK…RAKIAENERN (91 aa)) form the K-box domain.

Its subcellular location is the nucleus. Probable transcription factor involved in regulating genes that determines stamen and carpel development in wild-type flowers. The protein is Floral homeotic protein AGAMOUS (AG1) of Brassica napus (Rape).